A 481-amino-acid polypeptide reads, in one-letter code: 2-succinylbenzoate--CoA ligase (481 aa).

This sequence belongs to the ATP-dependent AMP-binding enzyme family. MenE subfamily.

It catalyses the reaction 2-succinylbenzoate + ATP + CoA = 2-succinylbenzoyl-CoA + AMP + diphosphate. It functions in the pathway quinol/quinone metabolism; 1,4-dihydroxy-2-naphthoate biosynthesis; 1,4-dihydroxy-2-naphthoate from chorismate: step 5/7. It participates in quinol/quinone metabolism; menaquinone biosynthesis. In terms of biological role, converts 2-succinylbenzoate (OSB) to 2-succinylbenzoyl-CoA (OSB-CoA). The protein is 2-succinylbenzoate--CoA ligase of Bacillus cereus (strain ATCC 10987 / NRS 248).